The chain runs to 332 residues: Methionine import ATP-binding protein MetN (332 aa).

Residues 2 to 239 (ITFQDVSKTY…PASDTARRFV (238 aa)) enclose the ABC transporter domain. 36 to 43 (GASGAGKS) contacts ATP.

It belongs to the ABC transporter superfamily. Methionine importer (TC 3.A.1.24) family. The complex is composed of two ATP-binding proteins (MetN), two transmembrane proteins (MetI) and a solute-binding protein (MetQ).

Its subcellular location is the cell inner membrane. The catalysed reaction is L-methionine(out) + ATP + H2O = L-methionine(in) + ADP + phosphate + H(+). It catalyses the reaction D-methionine(out) + ATP + H2O = D-methionine(in) + ADP + phosphate + H(+). Part of the ABC transporter complex MetNIQ involved in methionine import. Responsible for energy coupling to the transport system. In Caulobacter vibrioides (strain ATCC 19089 / CIP 103742 / CB 15) (Caulobacter crescentus), this protein is Methionine import ATP-binding protein MetN.